Here is a 309-residue protein sequence, read N- to C-terminus: Porphobilinogen deaminase (309 aa).

Cysteine 244 carries the post-translational modification S-(dipyrrolylmethanemethyl)cysteine.

The protein belongs to the HMBS family. Monomer. Requires dipyrromethane as cofactor.

It carries out the reaction 4 porphobilinogen + H2O = hydroxymethylbilane + 4 NH4(+). It participates in porphyrin-containing compound metabolism; protoporphyrin-IX biosynthesis; coproporphyrinogen-III from 5-aminolevulinate: step 2/4. Tetrapolymerization of the monopyrrole PBG into the hydroxymethylbilane pre-uroporphyrinogen in several discrete steps. The sequence is that of Porphobilinogen deaminase from Listeria monocytogenes serotype 4b (strain CLIP80459).